Consider the following 343-residue polypeptide: Methionine import ATP-binding protein MetN (343 aa).

The ABC transporter domain occupies 2 to 241; the sequence is ITLSHITKQF…PKTPLAQAFI (240 aa). 38–45 is a binding site for ATP; that stretch reads GASGAGKS.

It belongs to the ABC transporter superfamily. Methionine importer (TC 3.A.1.24) family. In terms of assembly, the complex is composed of two ATP-binding proteins (MetN), two transmembrane proteins (MetI) and a solute-binding protein (MetQ).

The protein localises to the cell inner membrane. It catalyses the reaction L-methionine(out) + ATP + H2O = L-methionine(in) + ADP + phosphate + H(+). The enzyme catalyses D-methionine(out) + ATP + H2O = D-methionine(in) + ADP + phosphate + H(+). Its function is as follows. Part of the ABC transporter complex MetNIQ involved in methionine import. Responsible for energy coupling to the transport system. The sequence is that of Methionine import ATP-binding protein MetN from Sodalis glossinidius (strain morsitans).